We begin with the raw amino-acid sequence, 450 residues long: Tubulin alpha-5 chain (450 aa).

7 residues coordinate GTP: glutamine 11, glutamate 71, glycine 144, threonine 145, threonine 179, asparagine 206, and asparagine 228. Glutamate 71 lines the Mg(2+) pocket. Glutamate 254 is a catalytic residue. Threonine 349 bears the Phosphothreonine mark. Positions 429 to 450 are disordered; it reads EKDYEEVGAEGGDDEEDEGEDY. Positions 431–450 are enriched in acidic residues; sequence DYEEVGAEGGDDEEDEGEDY.

The protein belongs to the tubulin family. As to quaternary structure, dimer of alpha and beta chains. A typical microtubule is a hollow water-filled tube with an outer diameter of 25 nm and an inner diameter of 15 nM. Alpha-beta heterodimers associate head-to-tail to form protofilaments running lengthwise along the microtubule wall with the beta-tubulin subunit facing the microtubule plus end conferring a structural polarity. Microtubules usually have 13 protofilaments but different protofilament numbers can be found in some organisms and specialized cells. Requires Mg(2+) as cofactor. Undergoes a tyrosination/detyrosination cycle, the cyclic removal and re-addition of a C-terminal tyrosine residue by the enzymes tubulin tyrosine carboxypeptidase (TTCP) and tubulin tyrosine ligase (TTL), respectively.

It localises to the cytoplasm. It is found in the cytoskeleton. The catalysed reaction is GTP + H2O = GDP + phosphate + H(+). Its function is as follows. Tubulin is the major constituent of microtubules, a cylinder consisting of laterally associated linear protofilaments composed of alpha- and beta-tubulin heterodimers. Microtubules grow by the addition of GTP-tubulin dimers to the microtubule end, where a stabilizing cap forms. Below the cap, tubulin dimers are in GDP-bound state, owing to GTPase activity of alpha-tubulin. The chain is Tubulin alpha-5 chain (TUBA5) from Arabidopsis thaliana (Mouse-ear cress).